A 358-amino-acid chain; its full sequence is uncharacterized protein (358 aa).

Belongs to the methyltransferase superfamily.

This is an uncharacterized protein from Mycobacterium tuberculosis (strain CDC 1551 / Oshkosh).